The sequence spans 974 residues: Receptor-like protein 7 (974 aa).

A signal peptide spans methionine 1–alanine 24. Residues threonine 25 to tryptophan 930 are Extracellular-facing. Residues asparagine 54 and asparagine 90 are each glycosylated (N-linked (GlcNAc...) asparagine). 6 LRR repeats span residues leucine 96–lysine 120, threonine 122–leucine 145, lysine 147–tyrosine 166, leucine 181–asparagine 204, arginine 206–isoleucine 229, and proline 230–glutamate 252. A glycan (N-linked (GlcNAc...) asparagine) is linked at asparagine 253. LRR repeat units follow at residues asparagine 254–leucine 277, lysine 278–leucine 301, serine 302–leucine 325, glutamine 327–leucine 349, and threonine 350–leucine 373. N-linked (GlcNAc...) asparagine glycans are attached at residues asparagine 279 and asparagine 300. Residue asparagine 348 is glycosylated (N-linked (GlcNAc...) asparagine). One copy of the LRR 12; degenerate repeat lies at serine 374–lysine 396. 18 LRR repeats span residues isoleucine 397–leucine 422, leucine 425–serine 448, threonine 454–proline 472, serine 473–glycine 495, arginine 496–methionine 519, threonine 521–serine 542, glutamate 544–tyrosine 570, serine 572–leucine 589, serine 590–serine 616, serine 618–alanine 638, threonine 639–cysteine 662, serine 664–serine 685, glutamine 687–glycine 712, phenylalanine 713–asparagine 737, leucine 785–leucine 809, lysine 810–leucine 833, lysine 834–leucine 857, and serine 859–arginine 882. Residues asparagine 434, asparagine 466, and asparagine 484 are each glycosylated (N-linked (GlcNAc...) asparagine). Asparagine 529 carries N-linked (GlcNAc...) asparagine glycosylation. N-linked (GlcNAc...) asparagine glycosylation is found at asparagine 577, asparagine 603, asparagine 624, and asparagine 637. Asparagine 737 carries an N-linked (GlcNAc...) asparagine glycan. Asparagine 816, asparagine 845, and asparagine 864 each carry an N-linked (GlcNAc...) asparagine glycan. The segment at leucine 899–glutamate 923 is disordered. Residues isoleucine 931–valine 951 traverse the membrane as a helical segment. Over valine 952–arginine 974 the chain is Cytoplasmic.

It belongs to the RLP family.

It is found in the cell membrane. The protein is Receptor-like protein 7 of Arabidopsis thaliana (Mouse-ear cress).